The sequence spans 150 residues: Large ribosomal subunit protein bL9 (150 aa).

Belongs to the bacterial ribosomal protein bL9 family.

In terms of biological role, binds to the 23S rRNA. This chain is Large ribosomal subunit protein bL9, found in Polaromonas naphthalenivorans (strain CJ2).